Reading from the N-terminus, the 310-residue chain is MPKFRVSLFSLALMLAVPFAPQAVAKTAAATTASQPEIASGSAMIVDLNTNKVIYSNHPDLVRPIASISKLMTAMVVLDARLPLDEKLKVDISQTPEMKGVYSRVRLNSEISRKDMLLLALMSSENRAAASLAHHYPGGYKAFIKAMNAKAKSLGMNNTRFVEPTGLSVHNVSTARDLTKLLIASKQYPLIGQLSTTREDMATFSNPTYTLPFRNTNHLVYRDNWNIQLTKTGFTNAAGHCLVMRTVINNKPVALVVMDAFGKYTHFADASRLRTWIETGKVMPVPAAALSYKKQKAAQMAAAGQTAQND.

Residues 1–25 (MPKFRVSLFSLALMLAVPFAPQAVA) form the signal peptide. Residue Ser-67 is the Acyl-ester intermediate of the active site. Catalysis depends on Lys-70, which acts as the Proton acceptor. Ser-124 is a catalytic residue. Lys-231 is a substrate binding site.

It belongs to the peptidase S11 family. Post-translationally, pbp8 is a proteolytic product of Pbp7.

The protein resides in the periplasm. In terms of biological role, cell wall formation. May play a specialized role in remodeling the cell wall. Specifically hydrolyzes the DD-diaminopimelate-alanine bonds in high-molecular-mass murein sacculi. The protein is D-alanyl-D-alanine endopeptidase (pbpG) of Escherichia coli (strain K12).